Consider the following 392-residue polypeptide: ATP phosphoribosyltransferase regulatory subunit (392 aa).

Belongs to the class-II aminoacyl-tRNA synthetase family. HisZ subfamily. As to quaternary structure, heteromultimer composed of HisG and HisZ subunits.

It localises to the cytoplasm. It functions in the pathway amino-acid biosynthesis; L-histidine biosynthesis; L-histidine from 5-phospho-alpha-D-ribose 1-diphosphate: step 1/9. Functionally, required for the first step of histidine biosynthesis. May allow the feedback regulation of ATP phosphoribosyltransferase activity by histidine. This is ATP phosphoribosyltransferase regulatory subunit from Prochlorococcus marinus (strain MIT 9211).